We begin with the raw amino-acid sequence, 217 residues long: Probable rhamnogalacturonan acetylesterase YesY (217 aa).

Catalysis depends on Ser-11, which acts as the Nucleophile. Residues Glu-178 and His-185 contribute to the active site.

Belongs to the 'GDSL' lipolytic enzyme family.

Functionally, may play a role in the degradation of rhamnogalacturonan derived from plant cell walls. Probably has broad substrate specificity and may degrade several types of acetylated substrates. The protein is Probable rhamnogalacturonan acetylesterase YesY (yesY) of Bacillus subtilis (strain 168).